The primary structure comprises 573 residues: 2-succinyl-5-enolpyruvyl-6-hydroxy-3-cyclohexene-1-carboxylate synthase (573 aa).

This sequence belongs to the TPP enzyme family. MenD subfamily. In terms of assembly, homodimer. It depends on Mg(2+) as a cofactor. Mn(2+) is required as a cofactor. Thiamine diphosphate serves as cofactor.

The catalysed reaction is isochorismate + 2-oxoglutarate + H(+) = 5-enolpyruvoyl-6-hydroxy-2-succinyl-cyclohex-3-ene-1-carboxylate + CO2. It participates in quinol/quinone metabolism; 1,4-dihydroxy-2-naphthoate biosynthesis; 1,4-dihydroxy-2-naphthoate from chorismate: step 2/7. It functions in the pathway quinol/quinone metabolism; menaquinone biosynthesis. Its function is as follows. Catalyzes the thiamine diphosphate-dependent decarboxylation of 2-oxoglutarate and the subsequent addition of the resulting succinic semialdehyde-thiamine pyrophosphate anion to isochorismate to yield 2-succinyl-5-enolpyruvyl-6-hydroxy-3-cyclohexene-1-carboxylate (SEPHCHC). The sequence is that of 2-succinyl-5-enolpyruvyl-6-hydroxy-3-cyclohexene-1-carboxylate synthase from Shewanella oneidensis (strain ATCC 700550 / JCM 31522 / CIP 106686 / LMG 19005 / NCIMB 14063 / MR-1).